We begin with the raw amino-acid sequence, 130 residues long: Holo-[acyl-carrier-protein] synthase (130 aa).

Residues aspartate 9 and glutamate 58 each contribute to the Mg(2+) site.

It belongs to the P-Pant transferase superfamily. AcpS family. Mg(2+) is required as a cofactor.

The protein resides in the cytoplasm. The enzyme catalyses apo-[ACP] + CoA = holo-[ACP] + adenosine 3',5'-bisphosphate + H(+). Its function is as follows. Transfers the 4'-phosphopantetheine moiety from coenzyme A to a Ser of acyl-carrier-protein. The polypeptide is Holo-[acyl-carrier-protein] synthase (Mycobacterium marinum (strain ATCC BAA-535 / M)).